The following is a 532-amino-acid chain: Light-independent protochlorophyllide reductase subunit B (532 aa).

D36 provides a ligand contact to [4Fe-4S] cluster. D292 serves as the catalytic Proton donor. Position 428 to 429 (428 to 429 (GL)) interacts with substrate. The segment at 445–486 (EEEEPESISNGHAAAAGSEGGVPDSGEAGDAGDTDGMPWSPD) is disordered.

Belongs to the ChlB/BchB/BchZ family. As to quaternary structure, protochlorophyllide reductase is composed of three subunits; BchL, BchN and BchB. Forms a heterotetramer of two BchB and two BchN subunits. [4Fe-4S] cluster is required as a cofactor.

It catalyses the reaction chlorophyllide a + oxidized 2[4Fe-4S]-[ferredoxin] + 2 ADP + 2 phosphate = protochlorophyllide a + reduced 2[4Fe-4S]-[ferredoxin] + 2 ATP + 2 H2O. Its pathway is porphyrin-containing compound metabolism; bacteriochlorophyll biosynthesis (light-independent). Functionally, component of the dark-operative protochlorophyllide reductase (DPOR) that uses Mg-ATP and reduced ferredoxin to reduce ring D of protochlorophyllide (Pchlide) to form chlorophyllide a (Chlide). This reaction is light-independent. The NB-protein (BchN-BchB) is the catalytic component of the complex. In Chlorobium phaeobacteroides (strain BS1), this protein is Light-independent protochlorophyllide reductase subunit B.